The primary structure comprises 361 residues: Chorismate synthase (361 aa).

NADP(+) contacts are provided by R48 and R54. FMN is bound by residues 125–127 (RSS), 238–239 (NA), G278, 293–297 (KPTSS), and R319.

This sequence belongs to the chorismate synthase family. In terms of assembly, homotetramer. It depends on FMNH2 as a cofactor.

It carries out the reaction 5-O-(1-carboxyvinyl)-3-phosphoshikimate = chorismate + phosphate. Its pathway is metabolic intermediate biosynthesis; chorismate biosynthesis; chorismate from D-erythrose 4-phosphate and phosphoenolpyruvate: step 7/7. In terms of biological role, catalyzes the anti-1,4-elimination of the C-3 phosphate and the C-6 proR hydrogen from 5-enolpyruvylshikimate-3-phosphate (EPSP) to yield chorismate, which is the branch point compound that serves as the starting substrate for the three terminal pathways of aromatic amino acid biosynthesis. This reaction introduces a second double bond into the aromatic ring system. In Salmonella dublin (strain CT_02021853), this protein is Chorismate synthase.